A 241-amino-acid chain; its full sequence is Tetraspanin-1 (241 aa).

The Cytoplasmic portion of the chain corresponds to 1–11; sequence MQCFSFIKTMM. Residues 12 to 34 traverse the membrane as a helical segment; the sequence is ILFNLLIFLCGAALLAVGIWVSI. At 35 to 53 the chain is on the extracellular side; that stretch reads DGASFLKIFGPLSSSAMQF. A helical transmembrane segment spans residues 54-76; the sequence is VNVGYFLIAAGVVVFALGFLGCY. Residues 77–88 are Cytoplasmic-facing; it reads GAKTESKCALMT. Residues 89-111 traverse the membrane as a helical segment; it reads FFFILLLIFIAEVAAAVVALVYT. The Extracellular segment spans residues 112 to 214; it reads TMAEHFLTLL…LYDIRTNAVT (103 aa). N-linked (GlcNAc...) asparagine glycosylation is found at N141, N154, N178, and N184. A helical transmembrane segment spans residues 215–237; the sequence is VGGVAAGIGGLELAAMIVSMYLY. Residues 238–241 are Cytoplasmic-facing; that stretch reads CNLQ.

It belongs to the tetraspanin (TM4SF) family. In terms of assembly, interacts with SLC19A2. Interacts with NTRK1/TRKA.

The protein localises to the lysosome membrane. In terms of biological role, structural component of specialized membrane microdomains known as tetraspanin-enriched microdomains (TERMs), which act as platforms for receptor clustering and signaling. Participates thereby in diverse biological functions such as cell signal transduction, adhesion, migration and protein trafficking. Regulates neuronal differentiation in response to NGF by facilitating NGF-mediated activation of NTRK1/TRKA receptor tyrosine kinase and subsequent downstream signaling pathways. Plays a role in the inhibition of TNFalpha-induced apoptosis. Mechanistically, inhibits the NF-kappa-B signaling pathway by blocking phosphorylation of CHUK. Also promotes the stability of the thiamine transporter 1/SLC19A2 in intestinal epithelial cells leading to an increase of thiamine uptake process. The chain is Tetraspanin-1 (TSPAN1) from Pongo abelii (Sumatran orangutan).